The following is a 419-amino-acid chain: UDP-N-acetylglucosamine 1-carboxyvinyltransferase 2 (419 aa).

Position 24–25 (24–25 (KN)) interacts with phosphoenolpyruvate. Arg94 serves as a coordination point for UDP-N-acetyl-alpha-D-glucosamine. Catalysis depends on Cys118, which acts as the Proton donor. Cys118 carries the post-translational modification 2-(S-cysteinyl)pyruvic acid O-phosphothioketal. Residues 123-127 (RPIDQ), Asp307, and Ile329 each bind UDP-N-acetyl-alpha-D-glucosamine.

Belongs to the EPSP synthase family. MurA subfamily.

It is found in the cytoplasm. The catalysed reaction is phosphoenolpyruvate + UDP-N-acetyl-alpha-D-glucosamine = UDP-N-acetyl-3-O-(1-carboxyvinyl)-alpha-D-glucosamine + phosphate. The protein operates within cell wall biogenesis; peptidoglycan biosynthesis. Its function is as follows. Cell wall formation. Adds enolpyruvyl to UDP-N-acetylglucosamine. This chain is UDP-N-acetylglucosamine 1-carboxyvinyltransferase 2, found in Staphylococcus aureus (strain MRSA252).